A 213-amino-acid polypeptide reads, in one-letter code: Calcineurin B-like protein 8 (213 aa).

Glycine 2 is lipidated: N-myristoyl glycine. 4 EF-hand domains span residues 31 to 66 (EVEA…RNSN), 67 to 102 (KKNL…FHPE), 104 to 139 (PLGD…LLNE), and 148 to 183 (AVEQ…NPAL). Aspartate 161, asparagine 163, aspartate 165, lysine 167, and glutamate 172 together coordinate Ca(2+).

It belongs to the calcineurin regulatory subunit family. As to quaternary structure, homodimer. Expressed at low levels in roots, shoots, culms, leaves and young spikelets.

It localises to the cell membrane. Functionally, acts as a calcium sensor. May function as positive regulator of salt stress responses. CBL proteins interact with CIPK serine-threonine protein kinases. Binding of a CBL protein to the regulatory NAF domain of a CIPK protein lead to the activation of the kinase in a calcium-dependent manner. The sequence is that of Calcineurin B-like protein 8 (CBL8) from Oryza sativa subsp. japonica (Rice).